A 184-amino-acid chain; its full sequence is GTP cyclohydrolase 1 (184 aa).

Zn(2+) contacts are provided by Cys75, His78, and Cys146.

It belongs to the GTP cyclohydrolase I family. Homomer.

The enzyme catalyses GTP + H2O = 7,8-dihydroneopterin 3'-triphosphate + formate + H(+). It participates in cofactor biosynthesis; 7,8-dihydroneopterin triphosphate biosynthesis; 7,8-dihydroneopterin triphosphate from GTP: step 1/1. The chain is GTP cyclohydrolase 1 from Teredinibacter turnerae (strain ATCC 39867 / T7901).